Consider the following 308-residue polypeptide: Pantothenate synthetase (308 aa).

39–46 (MGALHDGH) is a binding site for ATP. His46 functions as the Proton donor in the catalytic mechanism. Gln71 is a binding site for (R)-pantoate. Gln71 is a beta-alanine binding site. 157–160 (GEKD) is a binding site for ATP. Gln163 is a (R)-pantoate binding site. ATP-binding positions include Val186 and 194 to 197 (MSSR). The interval 286–308 (IETPAGTAGPDGDRQYAQSPWRN) is disordered.

Belongs to the pantothenate synthetase family. In terms of assembly, homodimer.

It localises to the cytoplasm. It carries out the reaction (R)-pantoate + beta-alanine + ATP = (R)-pantothenate + AMP + diphosphate + H(+). It participates in cofactor biosynthesis; (R)-pantothenate biosynthesis; (R)-pantothenate from (R)-pantoate and beta-alanine: step 1/1. Catalyzes the condensation of pantoate with beta-alanine in an ATP-dependent reaction via a pantoyl-adenylate intermediate. The polypeptide is Pantothenate synthetase (Mycobacterium avium (strain 104)).